Reading from the N-terminus, the 172-residue chain is uncharacterized protein (172 aa).

This is an uncharacterized protein from Bacillus subtilis (strain 168).